A 193-amino-acid chain; its full sequence is Oocyte-secreted protein 3 (193 aa).

The N-terminal stretch at M1 to Q22 is a signal peptide. Residues N64, N130, N148, N151, N165, and N178 are each glycosylated (N-linked (GlcNAc...) asparagine).

This sequence belongs to the PLAC1 family.

The protein localises to the secreted. This chain is Oocyte-secreted protein 3, found in Homo sapiens (Human).